The following is a 196-amino-acid chain: Molybdenum cofactor guanylyltransferase (196 aa).

Residues 14-16 (LAG), Lys27, Asp73, and Asp106 each bind GTP. Asp106 contacts Mg(2+).

It belongs to the MobA family. Monomer. It depends on Mg(2+) as a cofactor.

Its subcellular location is the cytoplasm. The enzyme catalyses Mo-molybdopterin + GTP + H(+) = Mo-molybdopterin guanine dinucleotide + diphosphate. Transfers a GMP moiety from GTP to Mo-molybdopterin (Mo-MPT) cofactor (Moco or molybdenum cofactor) to form Mo-molybdopterin guanine dinucleotide (Mo-MGD) cofactor. The protein is Molybdenum cofactor guanylyltransferase of Acidiphilium cryptum (strain JF-5).